Consider the following 89-residue polypeptide: Phosphocarrier protein HPr (89 aa).

The region spanning 1–88 (MLKQSIEIIN…DLINGYFGEG (88 aa)) is the HPr domain. His15 serves as the catalytic Pros-phosphohistidine intermediate. Residue Ser46 is modified to Phosphoserine; by HPrK/P.

It belongs to the HPr family.

It is found in the cytoplasm. Its activity is regulated as follows. Phosphorylation on Ser-46 inhibits the phosphoryl transfer from enzyme I to HPr. In terms of biological role, general (non sugar-specific) component of the phosphoenolpyruvate-dependent sugar phosphotransferase system (sugar PTS). This major carbohydrate active-transport system catalyzes the phosphorylation of incoming sugar substrates concomitantly with their translocation across the cell membrane. The phosphoryl group from phosphoenolpyruvate (PEP) is transferred to the phosphoryl carrier protein HPr by enzyme I. Phospho-HPr then transfers it to the PTS EIIA domain. This Neisseria meningitidis serogroup A / serotype 4A (strain DSM 15465 / Z2491) protein is Phosphocarrier protein HPr (ptsH).